The primary structure comprises 624 residues: Chaperone protein HtpG (624 aa).

Positions 1–336 (MKGQETRGFQ…SNDLPLNVSR (336 aa)) are a; substrate-binding. The tract at residues 337 to 552 (EILQDSTVTR…ADEMSTQMAK (216 aa)) is b. The interval 553–624 (LFAAAGQAVP…IRRMNQLLVS (72 aa)) is c.

Belongs to the heat shock protein 90 family. In terms of assembly, homodimer.

The protein resides in the cytoplasm. In terms of biological role, molecular chaperone. Has ATPase activity. This Citrobacter koseri (strain ATCC BAA-895 / CDC 4225-83 / SGSC4696) protein is Chaperone protein HtpG.